A 708-amino-acid chain; its full sequence is Lactotransferrin (708 aa).

A signal peptide spans 1–19 (MKLFFPALLSLGALGLCLA). 2 consecutive Transferrin-like domains span residues 25 to 352 (VRWC…GLRE) and 364 to 693 (VVWC…KLRR). Disulfide bonds link C28–C64 and C38–C55. The interaction with E.coli ompC stretch occupies residues 44-51 (RMKKVRGP). Position 79 (D79) interacts with Fe(3+). K92 is an active-site residue. Y111 is a binding site for Fe(3+). Intrachain disulfides connect C134-C217, C176-C192, C179-C202, C189-C200, and C250-C264. T136, R140, A142, and G143 together coordinate hydrogencarbonate. Y211 lines the Fe(3+) pocket. N252 is a glycosylation site (N-linked (GlcNAc...) asparagine). H272 contacts Fe(3+). The active-site Nucleophile is the S278. 2 disulfide bridges follow: C367/C399 and C377/C390. The N-linked (GlcNAc...) asparagine glycan is linked to N385. Fe(3+) contacts are provided by D414 and Y452. 8 disulfide bridges follow: C424-C703, C444-C666, C476-C551, C500-C694, C510-C524, C521-C534, C592-C606, and C644-C649. The hydrogencarbonate site is built by T478, R482, A484, and G485. N-linked (GlcNAc...) asparagine glycosylation is present at N537. Residue Y545 coordinates Fe(3+). Residue N594 is glycosylated (N-linked (GlcNAc...) asparagine). H614 contributes to the Fe(3+) binding site.

Belongs to the transferrin family. Monomer. Found in a complex with LTF, CLU, EPPIN and SEMG1. Interacts with E.coli outer membrane protein C (OmpC). Found in a complex with MPO and LTF; interacts directly with CP, allows Fe(3+) incorporation into LTF and activation of CP ferroxidase activity. Poly-N-acetyllactosaminic carbohydrate moiety seems to be needed for TLR4 activation.

It is found in the secreted. The protein localises to the cytoplasmic granule. In terms of biological role, transferrins are iron binding transport proteins which can bind two Fe(3+) ions in association with the binding of an anion, usually bicarbonate. Major iron-binding and multifunctional protein found in exocrine fluids such as breast milk and mucosal secretions. Has antimicrobial activity, which depends on the extracellular cation concentration. Antimicrobial properties include bacteriostasis, which is related to its ability to sequester free iron and thus inhibit microbial growth, as well as direct bactericidal properties leading to the release of lipopolysaccharides from the bacterial outer membrane. Can also prevent bacterial biofilm development in P.aeruginosa infection. Has weak antifungal activity against C.albicans. Has anabolic, differentiating and anti-apoptotic effects on osteoblasts and can also inhibit osteoclastogenesis, possibly playing a role in the regulation of bone growth. Promotes binding of species C adenoviruses to epithelial cells, promoting adenovirus infection. Can inhibit papillomavirus infections. Stimulates the TLR4 signaling pathway leading to NF-kappa-B activation and subsequent pro-inflammatory cytokine production while also interfering with the lipopolysaccharide (LPS)-stimulated TLR4 signaling. Inhibits neutrophil granulocyte migration to sites of apoptosis, when secreted by apoptotic cells. Stimulates VEGFA-mediated endothelial cell migration and proliferation. Binds heparin, chondroitin sulfate and possibly other glycosaminoglycans (GAGs). Also binds specifically to pneumococcal surface protein A (PspA), the lipid A portion of bacterial lipopolysaccharide (LPS), lysozyme and DNA. Its function is as follows. Lactoferricin binds to the bacterial surface and is crucial for the bactericidal functions. Has some antiviral activity against papillomavirus infection. N-terminal region shows strong antifungal activity against C.albicans. Contains two BBXB heparin-binding consensus sequences that appear to form the predominate functional GAG-binding site. Functionally, the lactotransferrin transferrin-like domain 1 functions as a serine protease of the peptidase S60 family that cuts arginine rich regions. This function contributes to the antimicrobial activity. Shows a preferential cleavage at -Arg-Ser-Arg-Arg-|- and -Arg-Arg-Ser-Arg-|-, and of Z-Phe-Arg-|-aminomethylcoumarin sites. This chain is Lactotransferrin (LTF), found in Camelus dromedarius (Dromedary).